The chain runs to 316 residues: Ribosomal protein L11 methyltransferase (316 aa).

Residues threonine 157, glycine 178, aspartate 200, and asparagine 243 each coordinate S-adenosyl-L-methionine.

The protein belongs to the methyltransferase superfamily. PrmA family.

It is found in the cytoplasm. The catalysed reaction is L-lysyl-[protein] + 3 S-adenosyl-L-methionine = N(6),N(6),N(6)-trimethyl-L-lysyl-[protein] + 3 S-adenosyl-L-homocysteine + 3 H(+). Functionally, methylates ribosomal protein L11. This Streptococcus pneumoniae (strain P1031) protein is Ribosomal protein L11 methyltransferase.